The sequence spans 275 residues: NH(3)-dependent NAD(+) synthetase (275 aa).

46–53 lines the ATP pocket; that stretch reads GISGGQDS. Asp52 serves as a coordination point for Mg(2+). Arg140 is a deamido-NAD(+) binding site. ATP is bound at residue Thr160. Glu165 lines the Mg(2+) pocket. Residues Lys173 and Asp180 each coordinate deamido-NAD(+). Positions 189 and 211 each coordinate ATP. Position 260-261 (260-261) interacts with deamido-NAD(+); the sequence is HK.

Belongs to the NAD synthetase family. In terms of assembly, homodimer.

It catalyses the reaction deamido-NAD(+) + NH4(+) + ATP = AMP + diphosphate + NAD(+) + H(+). Its pathway is cofactor biosynthesis; NAD(+) biosynthesis; NAD(+) from deamido-NAD(+) (ammonia route): step 1/1. Catalyzes the ATP-dependent amidation of deamido-NAD to form NAD. Uses ammonia as a nitrogen source. The polypeptide is NH(3)-dependent NAD(+) synthetase (Shigella boydii serotype 4 (strain Sb227)).